Here is a 1306-residue protein sequence, read N- to C-terminus: Receptor-type tyrosine-protein phosphatase C (1306 aa).

The first 25 residues, 1 to 25, serve as a signal peptide directing secretion; the sequence is MTMYLWLKLLAFGFAFLDTEVFVTG. At 26 to 577 the chain is on the extracellular side; it reads QSPTPSPTGL…LHHSTSYNSK (552 aa). Residues 28 to 163 form a disordered region; the sequence is PTPSPTGLTT…TASTFPTDPV (136 aa). Polar residues-rich tracts occupy residues 52 to 61 and 70 to 131; these read THTTAFSPAS and SETT…SGSA. Asn-80, Asn-92, Asn-97, Asn-186, Asn-192, Asn-199, Asn-234, Asn-262, Asn-272, and Asn-278 each carry an N-linked (GlcNAc...) asparagine glycan. Asn-286 carries an N-linked (GlcNAc...) asparagine; atypical glycan. Residues Asn-337, Asn-380, Asn-421, Asn-470, Asn-490, and Asn-531 are each glycosylated (N-linked (GlcNAc...) asparagine). Fibronectin type-III domains are found at residues 391–483 and 484–576; these read SPGE…TKSA and PPSQ…SYNS. A helical membrane pass occupies residues 578–598; the sequence is ALIAFLAFLIIVTSIALLVVL. Residues 599–1306 lie on the Cytoplasmic side of the membrane; that stretch reads YKIYDLHKKR…PASPALNQGS (708 aa). 2 consecutive Tyrosine-protein phosphatase domains span residues 653–912 and 944–1228; these read FLAE…LVEY and LEAE…IAST. Residue Tyr-683 is modified to Phosphotyrosine. Residues Asp-821, 853 to 859, and Gln-897 each bind substrate; that span reads CSAGVGR. Cys-853 (phosphocysteine intermediate) is an active-site residue. A phosphoserine mark is found at Ser-975, Ser-994, Ser-997, Ser-1001, Ser-1004, Ser-1005, and Ser-1009. The disordered stretch occupies residues 993–1014; it reads MSKESEHDSDESSDDDSDSEEP. Positions 999-1012 are enriched in acidic residues; sequence HDSDESSDDDSDSE. Catalysis depends on Cys-1169, which acts as the Phosphocysteine intermediate. A disordered region spans residues 1261 to 1306; it reads CVNPLGAPEKLPEAKEQAEGSEPTSGTEGPEHSVNGPASPALNQGS. Position 1299 is a phosphoserine (Ser-1299).

It belongs to the protein-tyrosine phosphatase family. Receptor class 1/6 subfamily. Binds GANAB and PRKCSH. Interacts with SKAP1. Interacts with DPP4; the interaction is enhanced in an interleukin-12-dependent manner in activated lymphocytes. Interacts with CD53; this interaction stabilizes PTPRC on the membrane and is required for optimal phosphatase activity. In terms of assembly, interacts with CLEC10A. As to quaternary structure, does not interact with CLEC10A. (Microbial infection) Interacts with human cytomegalovirus protein UL11; the interaction is required for binding of UL11 to T-cells. Post-translationally, heavily N- and O-glycosylated. As to expression, isoform 1: Detected in thymocytes. Isoform 2: Detected in thymocytes. Isoform 3: Detected in thymocytes. Isoform 4: Not detected in thymocytes. Isoform 5: Detected in thymocytes. Isoform 6: Not detected in thymocytes. Isoform 7: Detected in thymocytes. Isoform 8: Not detected in thymocytes.

The protein localises to the cell membrane. Its subcellular location is the membrane raft. It localises to the synapse. The enzyme catalyses O-phospho-L-tyrosyl-[protein] + H2O = L-tyrosyl-[protein] + phosphate. Its function is as follows. Protein tyrosine-protein phosphatase required for T-cell activation through the antigen receptor. Acts as a positive regulator of T-cell coactivation upon binding to DPP4. The first PTPase domain has enzymatic activity, while the second one seems to affect the substrate specificity of the first one. Upon T-cell activation, recruits and dephosphorylates SKAP1 and FYN. Dephosphorylates LYN, and thereby modulates LYN activity. Interacts with CLEC10A at antigen presenting cell-T cell contact; CLEC10A on immature dendritic cells recognizes Tn antigen-carrying PTPRC/CD45 receptor on effector T cells and modulates T cell activation threshold to limit autoreactivity. In terms of biological role, (Microbial infection) Acts as a receptor for human cytomegalovirus protein UL11 and mediates binding of UL11 to T-cells, leading to reduced induction of tyrosine phosphorylation of multiple signaling proteins upon T-cell receptor stimulation and impaired T-cell proliferation. The protein is Receptor-type tyrosine-protein phosphatase C of Homo sapiens (Human).